An 83-amino-acid chain; its full sequence is Toxin CjTL8 (83 aa).

A signal peptide spans 1 to 20 (MSSAIKILALLMVLVALAQA). Positions 21 to 44 (KPRKDYRAYPDFDDKSVILEDDKR) are excised as a propeptide. F81 carries the phenylalanine amide modification.

In terms of processing, contains 3 disulfide bonds.

The protein localises to the secreted. Its subcellular location is the nematocyst. In vivo, induces immediate paralysis on shrimps (C.multidentata), followed by death when high doses are injected. No activity is observed when injected into fly larvae (M.domestica). This chain is Toxin CjTL8, found in Epiactis japonica (Sea anemone).